Reading from the N-terminus, the 361-residue chain is tRNA 2-selenouridine synthase (361 aa).

Residues 11–134 (ALLERPLIDV…MRQCVNAEIE (124 aa)) enclose the Rhodanese domain. The S-selanylcysteine intermediate role is filled by Cys-94.

It belongs to the SelU family. In terms of assembly, monomer.

It catalyses the reaction 5-methylaminomethyl-2-thiouridine(34) in tRNA + selenophosphate + (2E)-geranyl diphosphate + H2O + H(+) = 5-methylaminomethyl-2-selenouridine(34) in tRNA + (2E)-thiogeraniol + phosphate + diphosphate. The catalysed reaction is 5-methylaminomethyl-2-thiouridine(34) in tRNA + (2E)-geranyl diphosphate = 5-methylaminomethyl-S-(2E)-geranyl-thiouridine(34) in tRNA + diphosphate. It carries out the reaction 5-methylaminomethyl-S-(2E)-geranyl-thiouridine(34) in tRNA + selenophosphate + H(+) = 5-methylaminomethyl-2-(Se-phospho)selenouridine(34) in tRNA + (2E)-thiogeraniol. The enzyme catalyses 5-methylaminomethyl-2-(Se-phospho)selenouridine(34) in tRNA + H2O = 5-methylaminomethyl-2-selenouridine(34) in tRNA + phosphate. In terms of biological role, involved in the post-transcriptional modification of the uridine at the wobble position (U34) of tRNA(Lys), tRNA(Glu) and tRNA(Gln). Catalyzes the conversion of 2-thiouridine (S2U-RNA) to 2-selenouridine (Se2U-RNA). Acts in a two-step process involving geranylation of 2-thiouridine (S2U) to S-geranyl-2-thiouridine (geS2U) and subsequent selenation of the latter derivative to 2-selenouridine (Se2U) in the tRNA chain. The protein is tRNA 2-selenouridine synthase of Chromohalobacter salexigens (strain ATCC BAA-138 / DSM 3043 / CIP 106854 / NCIMB 13768 / 1H11).